The primary structure comprises 339 residues: Tetracenomycin polyketide synthesis 8-O-methyl transferase TcmO (339 aa).

S-adenosyl-L-methionine contacts are provided by residues D200 and 226-228 (GDF). H246 serves as the catalytic Proton acceptor.

The protein belongs to the class I-like SAM-binding methyltransferase superfamily. Cation-independent O-methyltransferase family.

It functions in the pathway antibiotic biosynthesis; tetracenomycin C biosynthesis. This is Tetracenomycin polyketide synthesis 8-O-methyl transferase TcmO (tcmO) from Streptomyces glaucescens.